The primary structure comprises 890 residues: Protein FAM171A1 (890 aa).

The N-terminal stretch at Met-1 to Thr-21 is a signal peptide. The Extracellular portion of the chain corresponds to Lys-22 to Thr-303. N-linked (GlcNAc...) asparagine glycosylation is found at Asn-159, Asn-190, and Asn-194. Residues Val-304 to Leu-324 traverse the membrane as a helical segment. Residues Leu-325 to Lys-890 are Cytoplasmic-facing. Phosphoserine occurs at positions 358, 360, 371, 422, 443, and 525. 2 disordered regions span residues Ala-730 to Ala-759 and Glu-818 to Lys-890. The span at Asn-747–Gly-757 shows a compositional bias: basic and acidic residues. The segment covering Arg-822 to Glu-833 has biased composition (polar residues). Residues Ser-849 and Ser-855 each carry the phosphoserine modification. The segment covering Glu-858–Gly-869 has biased composition (acidic residues). Residues Glu-870–Pro-883 show a composition bias toward basic and acidic residues.

It belongs to the FAM171 family. In terms of assembly, interacts with ADAM10, NSG1 and OAZ1. As to expression, expressed in heart, brain, liver, skeletal muscle, kidney and pancreas. In brain, expressed by glia, pyramidal neurons and astrocytes (at protein level). Highly expressed in placental trophoblasts.

It localises to the cell membrane. In terms of biological role, involved in the regulation of the cytoskeletal dynamics, plays a role in actin stress fiber formation. The polypeptide is Protein FAM171A1 (Homo sapiens (Human)).